A 110-amino-acid chain; its full sequence is Bowman-Birk type proteinase inhibitor (110 aa).

A signal peptide spans 1 to 28 (MVLMNKKAIMKLALMLFLLGFTANVVDA). A propeptide spanning residues 29–42 (RFDSTSFITQVLSN) is cleaved from the precursor. 7 disulfide bridges follow: Cys-50–Cys-103, Cys-51–Cys-66, Cys-54–Cys-99, Cys-56–Cys-64, Cys-73–Cys-80, Cys-77–Cys-92, and Cys-82–Cys-90.

Monomer.

Functionally, inhibitor of trypsin and of chymotrypsin. The chain is Bowman-Birk type proteinase inhibitor from Lens culinaris (Lentil).